A 264-amino-acid chain; its full sequence is 3-methyl-2-oxobutanoate hydroxymethyltransferase (264 aa).

Residues aspartate 45 and aspartate 84 each coordinate Mg(2+). 3-methyl-2-oxobutanoate is bound by residues 45–46 (DS), aspartate 84, and lysine 112. Glutamate 114 serves as a coordination point for Mg(2+). Glutamate 181 acts as the Proton acceptor in catalysis.

This sequence belongs to the PanB family. In terms of assembly, homodecamer; pentamer of dimers. It depends on Mg(2+) as a cofactor.

Its subcellular location is the cytoplasm. It carries out the reaction 3-methyl-2-oxobutanoate + (6R)-5,10-methylene-5,6,7,8-tetrahydrofolate + H2O = 2-dehydropantoate + (6S)-5,6,7,8-tetrahydrofolate. Its pathway is cofactor biosynthesis; (R)-pantothenate biosynthesis; (R)-pantoate from 3-methyl-2-oxobutanoate: step 1/2. Functionally, catalyzes the reversible reaction in which hydroxymethyl group from 5,10-methylenetetrahydrofolate is transferred onto alpha-ketoisovalerate to form ketopantoate. This Shewanella amazonensis (strain ATCC BAA-1098 / SB2B) protein is 3-methyl-2-oxobutanoate hydroxymethyltransferase.